A 106-amino-acid polypeptide reads, in one-letter code: Thioredoxin (106 aa).

The Thioredoxin domain maps to Val2–Ala106. Catalysis depends on nucleophile residues Cys30 and Cys33. Cys30 and Cys33 are joined by a disulfide.

It belongs to the thioredoxin family.

Functionally, participates in various redox reactions through the reversible oxidation of its active center dithiol to a disulfide and catalyzes dithiol-disulfide exchange reactions. The polypeptide is Thioredoxin (Coprinus comatus (Shaggy mane)).